The following is a 496-amino-acid chain: Glycerol kinase (496 aa).

Residue Thr-12 participates in ADP binding. Positions 12, 13, and 14 each coordinate ATP. Sn-glycerol 3-phosphate is bound at residue Thr-12. Arg-16 contributes to the ADP binding site. Sn-glycerol 3-phosphate is bound by residues Arg-82, Glu-83, and Tyr-134. Positions 82, 83, and 134 each coordinate glycerol. At His-230 the chain carries Phosphohistidine; by HPr. Asp-244 contacts sn-glycerol 3-phosphate. 2 residues coordinate glycerol: Asp-244 and Gln-245. Positions 266 and 309 each coordinate ADP. Positions 266, 309, 313, and 410 each coordinate ATP. ADP is bound by residues Gly-410 and Asn-414.

This sequence belongs to the FGGY kinase family. As to quaternary structure, homotetramer and homodimer (in equilibrium). The phosphoenolpyruvate-dependent sugar phosphotransferase system (PTS), including enzyme I, and histidine-containing protein (HPr) are required for the phosphorylation, which leads to the activation of the enzyme.

It carries out the reaction glycerol + ATP = sn-glycerol 3-phosphate + ADP + H(+). The protein operates within polyol metabolism; glycerol degradation via glycerol kinase pathway; sn-glycerol 3-phosphate from glycerol: step 1/1. With respect to regulation, activated by phosphorylation and inhibited by fructose 1,6-bisphosphate (FBP). In terms of biological role, key enzyme in the regulation of glycerol uptake and metabolism. Catalyzes the phosphorylation of glycerol to yield sn-glycerol 3-phosphate. In Bacillus thuringiensis subsp. konkukian (strain 97-27), this protein is Glycerol kinase.